Reading from the N-terminus, the 487-residue chain is Glycogen synthase (487 aa).

Lys20 is a binding site for ADP-alpha-D-glucose.

It belongs to the glycosyltransferase 1 family. Bacterial/plant glycogen synthase subfamily.

The enzyme catalyses [(1-&gt;4)-alpha-D-glucosyl](n) + ADP-alpha-D-glucose = [(1-&gt;4)-alpha-D-glucosyl](n+1) + ADP + H(+). The protein operates within glycan biosynthesis; glycogen biosynthesis. Functionally, synthesizes alpha-1,4-glucan chains using ADP-glucose. The polypeptide is Glycogen synthase (Aliivibrio fischeri (strain MJ11) (Vibrio fischeri)).